The primary structure comprises 91 residues: Small ribosomal subunit protein bS20 (91 aa).

A disordered region spans residues 1–25; that stretch reads MANTKSAEKRHRQSLKRRARNVTVR. A compositionally biased stretch (basic residues) spans 8-20; the sequence is EKRHRQSLKRRAR.

Belongs to the bacterial ribosomal protein bS20 family.

Binds directly to 16S ribosomal RNA. The sequence is that of Small ribosomal subunit protein bS20 from Myxococcus xanthus (strain DK1622).